We begin with the raw amino-acid sequence, 153 residues long: MAPDVAWLLVLPLVFRPTLVTGITIQTAIKNFRTLHVDYPMVNYPKGFHGYCNGLMAYVRGKLQDWYCPKIHYVVHAPLEDIQKFCKYSESFCENYNEYCTLTQNSFPVTICTLVHQQAPTSCSYNSTLTNQRLYLLCSRKHDAEPIGIIGLY.

Residues 1 to 22 (MAPDVAWLLVLPLVFRPTLVTG) form the signal peptide.

This sequence belongs to the pancreatic ribonuclease family.

The protein localises to the secreted. In terms of biological role, does not exhibit any ribonuclease activity. This chain is Probable inactive ribonuclease-like protein 13 (Rnase13), found in Mus musculus (Mouse).